The sequence spans 513 residues: Zinc finger CCCH-type with G patch domain-containing protein (513 aa).

Met1 carries the post-translational modification N-acetylmethionine. Positions 92 to 131 are disordered; sequence PVAPGAELETVPSRETGPGPTEPGQEEDDGEDEEGGAALS. The span at 115 to 126 shows a compositional bias: acidic residues; the sequence is GQEEDDGEDEEG. Residues 176 to 202 form a C3H1-type zinc finger; it reads KSLKPCPFFLEGKCRFQENCRFSHGQV. Positions 267–298 are disordered; sequence LPPLRTDPAGSSDSDGSDADDPSYARVVEPGA. 2 positions are modified to phosphoserine: Ser278 and Ser355. The G-patch domain maps to 315–361; it reads TRGIGSRLLAKMGYEFGKGLGRRADGRVEPVHAVVLPRGKSLDQCAE. 2 disordered regions span residues 367–394 and 493–513; these read TRAG…PPPR and QEAG…MTEF. Basic and acidic residues predominate over residues 497 to 513; it reads LQREQRKADTHKKMTEF.

Interacts with CHD4/Mi-2; the interaction is direct.

Its subcellular location is the nucleus. In terms of biological role, transcription repressor that specifically binds the 5'-GGAG[GA]A[GA]A-3' consensus sequence. Represses transcription by recruiting the chromatin multiprotein complex NuRD to target promoters. Negatively regulates expression of EGFR, a gene involved in cell proliferation, survival and migration. Its ability to repress genes of the EGFR pathway suggest it may act as a tumor suppressor. This is Zinc finger CCCH-type with G patch domain-containing protein (ZGPAT) from Ovis aries (Sheep).